Reading from the N-terminus, the 461-residue chain is tRNA modification GTPase MnmE (461 aa).

(6S)-5-formyl-5,6,7,8-tetrahydrofolate-binding residues include Arg22, Glu87, and Arg126. Residues 223–382 (GLSTVILGRP…LEEAIAALFF (160 aa)) enclose the TrmE-type G domain. Asn233 serves as a coordination point for K(+). Residues 233–238 (NVGKSS), 252–258 (TDIAGTT), and 277–280 (DTAG) contribute to the GTP site. Position 237 (Ser237) interacts with Mg(2+). K(+) contacts are provided by Thr252, Ile254, and Thr257. Thr258 serves as a coordination point for Mg(2+). Lys461 contributes to the (6S)-5-formyl-5,6,7,8-tetrahydrofolate binding site.

This sequence belongs to the TRAFAC class TrmE-Era-EngA-EngB-Septin-like GTPase superfamily. TrmE GTPase family. Homodimer. Heterotetramer of two MnmE and two MnmG subunits. The cofactor is K(+).

The protein localises to the cytoplasm. Exhibits a very high intrinsic GTPase hydrolysis rate. Involved in the addition of a carboxymethylaminomethyl (cmnm) group at the wobble position (U34) of certain tRNAs, forming tRNA-cmnm(5)s(2)U34. The chain is tRNA modification GTPase MnmE from Lysinibacillus sphaericus (strain C3-41).